A 503-amino-acid polypeptide reads, in one-letter code: Cytochrome P450 monooxygenase roqO (503 aa).

A helical membrane pass occupies residues 11-31 (YSGTACAISLFIFGITLLFPF). An N-linked (GlcNAc...) asparagine glycan is attached at N205. C444 serves as a coordination point for heme.

Belongs to the cytochrome P450 family. It depends on heme as a cofactor.

The protein resides in the membrane. Its pathway is alkaloid biosynthesis. In terms of biological role, cytochrome P450 monooxygenase; part of the gene cluster that mediates the biosynthesis of the mycotoxin meleagrin. The first stage is catalyzed by the dipeptide synthase roqA which condenses histidine and tryptophan to produce histidyltryptophanyldiketopiperazine (HTD). HTD is then converted to roquefortine C through two possible pathways. In the first pathway, prenyltransferase roqD transforms HTD to the intermediate roquefortine D, which is in turn converted to roquefortine C by the cytochrome P450 monooxygenase roqR. In the second pathway, HTD is first converted to the intermediate dehydrohistidyltryptophanyldi-ketopiperazine (DHTD) by roqR which is then prenylated by roqD to form roquefortine C. Roquefortine C can be further transformed to meleagrin via three more reactions including oxydation to glandicolin A by roqM, which is further reduced to glandicoline B by roqO. Finally, glandicoline B is converted to meleagrin by the glandicoline B O-methyltransferase roqN. More studies identified further branching and additional metabolites produced by the roquefortine/meleagrin cluster, including roquefortine F, roquefortine L, roquefortine M, roquefortine N and neoxaline. The chain is Cytochrome P450 monooxygenase roqO from Penicillium rubens (strain ATCC 28089 / DSM 1075 / NRRL 1951 / Wisconsin 54-1255) (Penicillium chrysogenum).